Consider the following 290-residue polypeptide: Isopentenyl-diphosphate Delta-isomerase II (290 aa).

The Nudix hydrolase domain maps to 108–260 (MLHRAFTVFL…GLKLSPWFRL (153 aa)). Active-site residues include cysteine 145 and glutamate 207.

Belongs to the IPP isomerase type 1 family.

The enzyme catalyses isopentenyl diphosphate = dimethylallyl diphosphate. The protein operates within isoprenoid biosynthesis; dimethylallyl diphosphate biosynthesis; dimethylallyl diphosphate from isopentenyl diphosphate: step 1/1. It participates in porphyrin-containing compound metabolism; chlorophyll biosynthesis. Catalyzes the 1,3-allylic rearrangement of the homoallylic substrate isopentenyl (IPP) to its highly electrophilic allylic isomer, dimethylallyl diphosphate (DMAPP). The sequence is that of Isopentenyl-diphosphate Delta-isomerase II (IPI2) from Clarkia xantiana (Gunsight clarkia).